Here is a 279-residue protein sequence, read N- to C-terminus: Biotin synthase (279 aa).

Residues 2–228 enclose the Radical SAM core domain; it reads KTIMLCAISS…NARIMIAGGR (227 aa). Residues Cys17, Cys21, and Cys24 each coordinate [4Fe-4S] cluster. 4 residues coordinate [2Fe-2S] cluster: Cys61, Cys96, Cys154, and Arg221.

It belongs to the radical SAM superfamily. Biotin synthase family. As to quaternary structure, homodimer. [4Fe-4S] cluster is required as a cofactor. It depends on [2Fe-2S] cluster as a cofactor.

It catalyses the reaction (4R,5S)-dethiobiotin + (sulfur carrier)-SH + 2 reduced [2Fe-2S]-[ferredoxin] + 2 S-adenosyl-L-methionine = (sulfur carrier)-H + biotin + 2 5'-deoxyadenosine + 2 L-methionine + 2 oxidized [2Fe-2S]-[ferredoxin]. Its pathway is cofactor biosynthesis; biotin biosynthesis; biotin from 7,8-diaminononanoate: step 2/2. Catalyzes the conversion of dethiobiotin (DTB) to biotin by the insertion of a sulfur atom into dethiobiotin via a radical-based mechanism. The protein is Biotin synthase of Campylobacter curvus (strain 525.92).